Here is a 71-residue protein sequence, read N- to C-terminus: Large ribosomal subunit protein bL31 (71 aa).

4 residues coordinate Zn(2+): Cys16, Cys18, Cys37, and Cys40.

This sequence belongs to the bacterial ribosomal protein bL31 family. Type A subfamily. As to quaternary structure, part of the 50S ribosomal subunit. Requires Zn(2+) as cofactor.

Binds the 23S rRNA. The protein is Large ribosomal subunit protein bL31 of Chromohalobacter salexigens (strain ATCC BAA-138 / DSM 3043 / CIP 106854 / NCIMB 13768 / 1H11).